Here is an 89-residue protein sequence, read N- to C-terminus: Small ribosomal subunit protein uS15 (89 aa).

This sequence belongs to the universal ribosomal protein uS15 family. As to quaternary structure, part of the 30S ribosomal subunit. Forms a bridge to the 50S subunit in the 70S ribosome, contacting the 23S rRNA.

Functionally, one of the primary rRNA binding proteins, it binds directly to 16S rRNA where it helps nucleate assembly of the platform of the 30S subunit by binding and bridging several RNA helices of the 16S rRNA. Forms an intersubunit bridge (bridge B4) with the 23S rRNA of the 50S subunit in the ribosome. The polypeptide is Small ribosomal subunit protein uS15 (Aeromonas hydrophila subsp. hydrophila (strain ATCC 7966 / DSM 30187 / BCRC 13018 / CCUG 14551 / JCM 1027 / KCTC 2358 / NCIMB 9240 / NCTC 8049)).